We begin with the raw amino-acid sequence, 931 residues long: Bifunctional uridylyltransferase/uridylyl-removing enzyme (931 aa).

The tract at residues 1–383 is uridylyltransferase; sequence MDLATTNDAA…RPGTELRRVP (383 aa). The interval 384 to 739 is uridylyl-removing; that stretch reads EGDDFIIDNN…VGFDEARGVT (356 aa). The HD domain occupies 499-622; it reads VDEHLLRCIG…VQSVEQMKLL (124 aa). 2 ACT domains span residues 740–822 and 851–931; these read ELTI…VVAR and VIEV…QSVG.

It belongs to the GlnD family. Requires Mg(2+) as cofactor.

The enzyme catalyses [protein-PII]-L-tyrosine + UTP = [protein-PII]-uridylyl-L-tyrosine + diphosphate. It carries out the reaction [protein-PII]-uridylyl-L-tyrosine + H2O = [protein-PII]-L-tyrosine + UMP + H(+). Its activity is regulated as follows. Uridylyltransferase (UTase) activity is inhibited by glutamine, while glutamine activates uridylyl-removing (UR) activity. Its function is as follows. Modifies, by uridylylation and deuridylylation, the PII regulatory proteins (GlnB and homologs), in response to the nitrogen status of the cell that GlnD senses through the glutamine level. Under low glutamine levels, catalyzes the conversion of the PII proteins and UTP to PII-UMP and PPi, while under higher glutamine levels, GlnD hydrolyzes PII-UMP to PII and UMP (deuridylylation). Thus, controls uridylylation state and activity of the PII proteins, and plays an important role in the regulation of nitrogen assimilation and metabolism. The polypeptide is Bifunctional uridylyltransferase/uridylyl-removing enzyme (Nitrobacter hamburgensis (strain DSM 10229 / NCIMB 13809 / X14)).